The chain runs to 131 residues: Profilin-3 (131 aa).

Belongs to the profilin family. As to quaternary structure, occurs in many kinds of cells as a complex with monomeric actin in a 1:1 ratio.

The protein localises to the cytoplasm. It is found in the cytoskeleton. In terms of biological role, binds to actin and affects the structure of the cytoskeleton. At high concentrations, profilin prevents the polymerization of actin, whereas it enhances it at low concentrations. By binding to PIP2, it inhibits the formation of IP3 and DG. The chain is Profilin-3 (PRO3) from Triticum aestivum (Wheat).